Here is a 503-residue protein sequence, read N- to C-terminus: MQNFKELGISDKTVETLEAMGFKEPTPIQKDSIPYTLEGKDILGQAQTGTGKTGAFGIPLIEKVVGQSGVQALILAPTRELAMQVAEQLREFSRGQNVQVVTVFGGMPIDRQIKALKRGPQIVVGTPGRVIDHLNRRTLKTNGIHTLILDEADEMMNMGFIDDMRFIMDKIPAEQRQTMLFSATMPKAIQTLVQQFMKSPQIVKTMNNEMSDPQIDEYYTIVKELEKFDTFTNFLDVHQPELAIVFGRTKRRVDELTSALLSKGYKAEGLHGDITQAKRLEVLKKFKNDQIDILVATDVAARGLDISGVSHVYNFDIPQDTESYTHRIGRTGRAGKEGIAVTFVNPIEMDYIRQIEDSNGRRMNALRPPHRKEVLKAREDDIKDKVKNWMSRESEARLKRISSELLEEYDSTELVASLLQELVEANDEVEVQLTFEKPLARKNRQGKGNGSRRGGKRNNKFDNKNKRSKGNFNKKKGKKTDRRERQDKGRSTMKGRTFADLQK.

The Q motif signature appears at 2 to 30 (QNFKELGISDKTVETLEAMGFKEPTPIQK). The Helicase ATP-binding domain maps to 33–203 (IPYTLEGKDI…QQFMKSPQIV (171 aa)). 46-53 (AQTGTGKT) serves as a coordination point for ATP. The DEAD box motif lies at 150-153 (DEAD). A Helicase C-terminal domain is found at 214 to 375 (QIDEYYTIVK…LRPPHRKEVL (162 aa)). The interval 436–503 (EKPLARKNRQ…KGRTFADLQK (68 aa)) is disordered. Over residues 466-480 (KRSKGNFNKKKGKKT) the composition is skewed to basic residues. Basic and acidic residues predominate over residues 481 to 490 (DRRERQDKGR).

Belongs to the DEAD box helicase family. CshA subfamily. As to quaternary structure, oligomerizes, may be a member of the RNA degradosome.

It localises to the cytoplasm. It catalyses the reaction ATP + H2O = ADP + phosphate + H(+). In terms of biological role, DEAD-box RNA helicase possibly involved in RNA degradation. Unwinds dsRNA in both 5'- and 3'-directions, has RNA-dependent ATPase activity. The protein is DEAD-box ATP-dependent RNA helicase CshA of Staphylococcus haemolyticus (strain JCSC1435).